The sequence spans 518 residues: Lysine 5,6-aminomutase alpha subunit (518 aa).

Residues 184–189 (RTTGQS), S238, Y263, R268, and N299 each bind pyridoxal 5'-phosphate.

It belongs to the KamD family. Heterotetramer of 2 alpha and 2 beta subunits. Adenosylcob(III)alamin is required as a cofactor. The cofactor is pyridoxal 5'-phosphate.

It catalyses the reaction (3S)-3,6-diaminohexanoate = (3S,5S)-3,5-diaminohexanoate. The enzyme catalyses D-lysine = (2R,5S)-2,5-diaminohexanoate. The protein operates within amino-acid degradation; L-lysine degradation via acetate pathway. In terms of biological role, catalyzes the migration of the L-beta-lysine and D-lysine epsilon amino group to the delta carbon to produce 3,5-diaminohexanoate and 2,5-diaminohexanoate, respectively. The chain is Lysine 5,6-aminomutase alpha subunit from Fusobacterium nucleatum subsp. nucleatum (strain ATCC 25586 / DSM 15643 / BCRC 10681 / CIP 101130 / JCM 8532 / KCTC 2640 / LMG 13131 / VPI 4355).